We begin with the raw amino-acid sequence, 819 residues long: uncharacterized protein (819 aa).

S16 bears the Phosphoserine mark. 2 disordered regions span residues 28–83 (SNTQ…PPTV) and 96–134 (PTFT…ASKI). Residues 36–63 (KIRFTENENDLSPERAQKEPVSIPHGRY) constitute a DNA-binding region (zn(2)-C6 fungal-type). Composition is skewed to polar residues over residues 64–77 (TWST…SHLP) and 96–118 (PTFT…NDYI).

It localises to the nucleus. This is an uncharacterized protein from Schizosaccharomyces pombe (strain 972 / ATCC 24843) (Fission yeast).